A 170-amino-acid chain; its full sequence is MLRTMLTAKIHRATVTQADLHYVGSVTIDADLLEAADLLPGEQVTIVDINNGARLETYAIAGPAGSGVIGINGAAARLVQPGDLVIIIAYGMMDDAEARRHVPRVLFVDAENRIIGRGHDPAEALPDDPSSLRGDLAVPGNPVTAAARRGTPTHQAPVALPASRTVVAPR.

Catalysis depends on Ser25, which acts as the Schiff-base intermediate with substrate; via pyruvic acid. Ser25 carries the post-translational modification Pyruvic acid (Ser). Position 57 (Thr57) interacts with substrate. The Proton donor role is filled by Tyr58. Residue 73–75 participates in substrate binding; that stretch reads GAA. A disordered region spans residues 118–170; it reads GHDPAEALPDDPSSLRGDLAVPGNPVTAAARRGTPTHQAPVALPASRTVVAPR.

Belongs to the PanD family. Heterooctamer of four alpha and four beta subunits. Requires pyruvate as cofactor. Post-translationally, is synthesized initially as an inactive proenzyme, which is activated by self-cleavage at a specific serine bond to produce a beta-subunit with a hydroxyl group at its C-terminus and an alpha-subunit with a pyruvoyl group at its N-terminus.

It is found in the cytoplasm. It carries out the reaction L-aspartate + H(+) = beta-alanine + CO2. Its pathway is cofactor biosynthesis; (R)-pantothenate biosynthesis; beta-alanine from L-aspartate: step 1/1. In terms of biological role, catalyzes the pyruvoyl-dependent decarboxylation of aspartate to produce beta-alanine. In Frankia alni (strain DSM 45986 / CECT 9034 / ACN14a), this protein is Aspartate 1-decarboxylase.